The primary structure comprises 878 residues: Aminopeptidase M1-C (878 aa).

A required for membrane association region spans residues 102-209 (LGEGVLAMDF…MSTYLVAIVV (108 aa)). Residues glutamate 142 and 275-279 (GAMEN) contribute to the substrate site. Histidine 311 is a Zn(2+) binding site. Glutamate 312 functions as the Proton acceptor in the catalytic mechanism. Positions 315 and 334 each coordinate Zn(2+). The Dileucine internalization motif motif lies at 726–727 (LL).

It belongs to the peptidase M1 family. In terms of assembly, homodimer. Zn(2+) is required as a cofactor.

The protein resides in the membrane. Its subcellular location is the microsome membrane. The protein localises to the cytoplasm. The catalysed reaction is Release of an N-terminal amino acid, Xaa-|-Yaa- from a peptide, amide or arylamide. Xaa is preferably Ala, but may be most amino acids including Pro (slow action). When a terminal hydrophobic residue is followed by a prolyl residue, the two may be released as an intact Xaa-Pro dipeptide.. The protein is Aminopeptidase M1-C of Oryza sativa subsp. japonica (Rice).